A 1226-amino-acid chain; its full sequence is MGSNIRAQIEAQLKQRILLIDGGMGTMIQGYKLQEQDYRGERFADWHSDLKGNNDLLVLTQPQLIKEIHHAYLEAGADILETNTFNATTIAMADYDMESLSEEINFAAAKLAREAADEWTAKNPAKPRYVAGVLGPTNRTCSISPDVNDPGYRNVSFDELVEAYSESTRALIRGGSDLILIETIFDTLNAKACAFAVESVFEELGFALPVMISGTITDASGRTLSGQTTEAFYNSLRHVRPISFGLNCALGPDELRPYVEELSRISETFVSTHPNAGLPNAFGEYDLSPEEMAEHVKEWAQSGFLNLIGGCCGTTPEHIRHMAMAVEGESPRVLPEIPVACRLSGLEPLTIAKDTLFVNVGERTNVTGSARFKRLIKEELYDEALDVAREQVENGAQIIDINMDEGMLDAEACMVRFLNLCASEPEISKVPIMVDSSKWEVIEAGLKCIQGKGIVNSISLKEGKEKFVEQAKLIRRYGAAVIVMAFDEVGQADTRERKLEICTKAYRILVDEVGFPPEDVIFDPNIFAVATGIDEHNNYAVDFIEAVADIKRDLPHAMISGGVSNVSFSFRGNNYVREAIHAVFLYHCFKNGMDMGIVNAGQLEIYDNVPEKLREAVEDVVLNRRDDATERLLEIAEEYRENAVGKQEDASALEWRTWSVEKRLEHALVKGITEFIVEDTEEARLNASKPLEVIEGPLMDGMNVVGDLFGEGKMFLPQVVKSARVMKQAVAHLEPFINASKQVGSSNGKILLATVKGDVHDIGKNIVGVVLQCNNYEIIDLGVMVPCEQILKVAKEQQVDIIGLSGLITPSLDEMVHVAKEMERLGFDLPLLIGGATTSKAHTAVKIEQNYSHPVVYVNNASRAVGVCTSLLSDELRPAFVERLQADYELVRDQHNRKKPRTKPVTLEAARANKVAIDWQSYTPPAPSQPGVHVFDDFDVATLRQYIDWTPFFLTWSLVGKYPTIFEHEEVGEEAKRLFEDANEWLDRIEQEGLLKARGMCGLFPAASVGDDIEVYTDESRTQVAKVLHNLRQQTEKPKGANYCLSDYVAPKESGKKDWIGAFAVTGGVNERELADQFKAQGDDYNAIMIQAVADRLAEAFAEYLHERVRKEIWGYAADENLSNEELIREKYQGIRPAPGYPACPEHTEKGPLWELLNVEETIGMSLTSSYAMWPGASVSGWYFSHPDSRYFAIAQIQQDQVESYAKRKGWDLLEAEKWLGPNING.

The Hcy-binding domain maps to 6-326 (RAQIEAQLKQ…EHIRHMAMAV (321 aa)). Residues cysteine 248, cysteine 311, and cysteine 312 each contribute to the Zn(2+) site. The region spanning 357–618 (FVNVGERTNV…VPEKLREAVE (262 aa)) is the Pterin-binding domain. Residues 651 to 745 (SALEWRTWSV…FINASKQVGS (95 aa)) enclose the B12-binding N-terminal domain. Methylcob(III)alamin is bound by residues glutamate 695, 757–761 (GDVHD), histidine 760, serine 805, threonine 809, and alanine 861. Positions 747 to 882 (NGKILLATVK…SDELRPAFVE (136 aa)) constitute a B12-binding domain. One can recognise an AdoMet activation domain in the interval 898-1226 (KKPRTKPVTL…EKWLGPNING (329 aa)). S-adenosyl-L-methionine is bound by residues aspartate 948, arginine 1136, and 1191 to 1192 (YF).

Belongs to the vitamin-B12 dependent methionine synthase family. Methylcob(III)alamin is required as a cofactor. It depends on Zn(2+) as a cofactor.

The enzyme catalyses (6S)-5-methyl-5,6,7,8-tetrahydrofolate + L-homocysteine = (6S)-5,6,7,8-tetrahydrofolate + L-methionine. It participates in amino-acid biosynthesis; L-methionine biosynthesis via de novo pathway; L-methionine from L-homocysteine (MetH route): step 1/1. Catalyzes the transfer of a methyl group from methyl-cobalamin to homocysteine, yielding enzyme-bound cob(I)alamin and methionine. Subsequently, remethylates the cofactor using methyltetrahydrofolate. This is Methionine synthase (metH) from Vibrio vulnificus (strain YJ016).